Consider the following 185-residue polypeptide: Ribosome-recycling factor (185 aa).

The interval 142–161 (LVKDGEAGEDEGARAEKELD) is disordered.

Belongs to the RRF family.

Its subcellular location is the cytoplasm. Responsible for the release of ribosomes from messenger RNA at the termination of protein biosynthesis. May increase the efficiency of translation by recycling ribosomes from one round of translation to another. The protein is Ribosome-recycling factor of Paenarthrobacter aurescens (strain TC1).